Consider the following 936-residue polypeptide: E3 ubiquitin-protein ligase ZNRF3 (936 aa).

Residues 1-31 (MRPRSGGRPGATGRRRRRLRRRPRGLRCSRL) are disordered. Positions 1 to 55 (MRPRSGGRPGATGRRRRRLRRRPRGLRCSRLPPPPPLPLLLGLLLAAAGPGAARA) are cleaved as a signal peptide. The span at 13 to 27 (GRRRRRLRRRPRGLR) shows a compositional bias: basic residues. The Extracellular portion of the chain corresponds to 56 to 219 (KETAFVEVVL…PRQPTEYFDM (164 aa)). Residues 220-240 (GIFLAFFVVVSLVCLILLVKI) form a helical membrane-spanning segment. Topologically, residues 241–936 (KLKQRRSQNS…HSADSSSPGA (696 aa)) are cytoplasmic. The segment at 293–334 (CAICLEKYIDGEELRVIPCTHRFHRKCVDPWLLQHHTCPHCR) adopts an RING-type; atypical zinc-finger fold. Disordered regions lie at residues 608-693 (SEAG…SPGA), 739-758 (LYEGSGPAGGEPQSGSSQGL), 849-875 (THSLGSWGGTRGPDTPRPHRGLGATRE), and 892-936 (CPPE…SPGA). Over residues 654–684 (SGDQVSTCSLEMNYSSNSSLEHRGPNSSTSE) the composition is skewed to polar residues. Residues 913-922 (ESSTTATEAA) show a composition bias toward low complexity.

This sequence belongs to the ZNRF3 family. Interacts with LRP6, FZD4, FZD5, FZD6 and FZD8. Interacts with RSPO1; interaction promotes indirect interaction with LGR4 and membrane clearance of ZNRF3. Also interacts with RSPO2. Interacts with LMBR1L.

It is found in the cell membrane. It catalyses the reaction S-ubiquitinyl-[E2 ubiquitin-conjugating enzyme]-L-cysteine + [acceptor protein]-L-lysine = [E2 ubiquitin-conjugating enzyme]-L-cysteine + N(6)-ubiquitinyl-[acceptor protein]-L-lysine.. Its pathway is protein modification; protein ubiquitination. With respect to regulation, negatively regulated by R-spondin proteins such as RSPO1: interaction with RSPO1 induces the indirect association between ZNRF3 and LGR4, promoting membrane clearance of ZNRF3. E3 ubiquitin-protein ligase that acts as a negative regulator of the Wnt signaling pathway by mediating the ubiquitination and subsequent degradation of Wnt receptor complex components Frizzled and LRP6. Acts on both canonical and non-canonical Wnt signaling pathway. Acts as a tumor suppressor in the intestinal stem cell zone by inhibiting the Wnt signaling pathway, thereby restricting the size of the intestinal stem cell zone. Along with RSPO2 and RNF43, constitutes a master switch that governs limb specification. The protein is E3 ubiquitin-protein ligase ZNRF3 (ZNRF3) of Homo sapiens (Human).